The following is a 147-amino-acid chain: Lysozyme C (147 aa).

An N-terminal signal peptide occupies residues 1–18 (MKVLLLLGFIFCSMAAHG). One can recognise a C-type lysozyme domain in the interval 19 to 147 (KRMERCEFAR…LSKYLEGCHL (129 aa)). Cystine bridges form between cysteine 24–cysteine 145, cysteine 48–cysteine 133, cysteine 83–cysteine 99, and cysteine 95–cysteine 113. Active-site residues include glutamate 53 and aspartate 71.

It belongs to the glycosyl hydrolase 22 family. As to quaternary structure, monomer.

Its subcellular location is the secreted. The enzyme catalyses Hydrolysis of (1-&gt;4)-beta-linkages between N-acetylmuramic acid and N-acetyl-D-glucosamine residues in a peptidoglycan and between N-acetyl-D-glucosamine residues in chitodextrins.. In terms of biological role, lysozymes have primarily a bacteriolytic function; those in tissues and body fluids are associated with the monocyte-macrophage system and enhance the activity of immunoagents. The polypeptide is Lysozyme C (LYZ) (Trichosurus vulpecula (Brush-tailed possum)).